The primary structure comprises 873 residues: Probable beta-glucosidase A (873 aa).

The first 19 residues, 1-19 (MRFGWLEVAALTAASVANA), serve as a signal peptide directing secretion. N-linked (GlcNAc...) asparagine glycosylation is found at Asn-71, Asn-222, and Asn-263. The active site involves Asp-291. 9 N-linked (GlcNAc...) asparagine glycosylation sites follow: Asn-326, Asn-333, Asn-365, Asn-453, Asn-534, Asn-553, Asn-575, Asn-679, and Asn-725. The segment at 730–765 (EDSSDDPNYGWEDSEYIPEGARDGSPQPLLKAGGAP) is disordered.

The protein belongs to the glycosyl hydrolase 3 family.

The protein localises to the secreted. It carries out the reaction Hydrolysis of terminal, non-reducing beta-D-glucosyl residues with release of beta-D-glucose.. It participates in glycan metabolism; cellulose degradation. Functionally, beta-glucosidases are one of a number of cellulolytic enzymes involved in the degradation of cellulosic biomass. Catalyzes the last step releasing glucose from the inhibitory cellobiose. In Neosartorya fischeri (strain ATCC 1020 / DSM 3700 / CBS 544.65 / FGSC A1164 / JCM 1740 / NRRL 181 / WB 181) (Aspergillus fischerianus), this protein is Probable beta-glucosidase A (bglA).